Here is a 208-residue protein sequence, read N- to C-terminus: Putative adhesin P1-like protein MPN_468 (208 aa).

Disordered regions lie at residues 29-49 (TNGS…VAPT) and 97-172 (DSKT…NLTP). Low complexity predominate over residues 100-132 (TQNNTTTNENHTKFASATGSGQQQGSTTTTSAG). Over residues 145 to 158 (SGNSISVQEATSGD) the composition is skewed to polar residues. Low complexity predominate over residues 159–172 (NLTNYTNLPPNLTP).

This sequence belongs to the adhesin P1 family.

This Mycoplasma pneumoniae (strain ATCC 29342 / M129 / Subtype 1) (Mycoplasmoides pneumoniae) protein is Putative adhesin P1-like protein MPN_468.